A 513-amino-acid chain; its full sequence is Probable histone deacetylase 19 (513 aa).

The histone deacetylase stretch occupies residues 23–334 (RRVCYFYDPD…WCYETGVALG (312 aa)). His-154 serves as the catalytic Proton donor/acceptor. Asp-189, His-191, and Asp-277 together coordinate Zn(2+). 2 disordered regions span residues 384–432 (HAPS…ESSR) and 446–513 (ENAT…YHKP). Over residues 398–409 (EIPEQDEDQDDP) the composition is skewed to acidic residues. Residues 410 to 432 (DERHDPDSDMEVDDHKAVEESSR) show a composition bias toward basic and acidic residues. Residues 492 to 504 (NVKNEPESSTKLQ) show a composition bias toward polar residues.

It belongs to the histone deacetylase family. HD type 1 subfamily. Zn(2+) serves as cofactor.

The protein resides in the nucleus. The catalysed reaction is N(6)-acetyl-L-lysyl-[histone] + H2O = L-lysyl-[histone] + acetate. Functionally, responsible for the deacetylation of lysine residues on the N-terminal part of the core histones (H2A, H2B, H3 and H4). Histone deacetylation gives a tag for epigenetic repression and plays an important role in transcriptional regulation, cell cycle progression and developmental events. Histone deacetylases act via the formation of large multiprotein complexes. The sequence is that of Probable histone deacetylase 19 from Zea mays (Maize).